A 336-amino-acid polypeptide reads, in one-letter code: Phospho-N-acetylmuramoyl-pentapeptide-transferase (336 aa).

The next 10 helical transmembrane spans lie at 3-23 (LTLIAAIISFMVSAFTMPYFI), 53-73 (GGTVFLLVATAVSLLVSLFSI), 78-98 (SLALISGILSIVVIYGIIGFL), 118-138 (LALQLAGGLMFYFLHVSPSGI), 143-163 (VFGYQLSLGIFYLFFVLFWVV), 174-194 (GIDGLASISVVISLVTYGVIA), 200-220 (FDVLLLIGTMIGALLGFFCFN), 226-246 (VFMGDVGSLALGAMLAAISIA), 251-271 (WTLLIIGIVYVLETSSVMLQV), and 316-336 (AFLWGVGSLASLLVLAILYVF).

This sequence belongs to the glycosyltransferase 4 family. MraY subfamily. Requires Mg(2+) as cofactor.

Its subcellular location is the cell membrane. It carries out the reaction UDP-N-acetyl-alpha-D-muramoyl-L-alanyl-gamma-D-glutamyl-L-lysyl-D-alanyl-D-alanine + di-trans,octa-cis-undecaprenyl phosphate = Mur2Ac(oyl-L-Ala-gamma-D-Glu-L-Lys-D-Ala-D-Ala)-di-trans,octa-cis-undecaprenyl diphosphate + UMP. The protein operates within cell wall biogenesis; peptidoglycan biosynthesis. Its function is as follows. Catalyzes the initial step of the lipid cycle reactions in the biosynthesis of the cell wall peptidoglycan: transfers peptidoglycan precursor phospho-MurNAc-pentapeptide from UDP-MurNAc-pentapeptide onto the lipid carrier undecaprenyl phosphate, yielding undecaprenyl-pyrophosphoryl-MurNAc-pentapeptide, known as lipid I. In Streptococcus pyogenes serotype M4 (strain MGAS10750), this protein is Phospho-N-acetylmuramoyl-pentapeptide-transferase.